We begin with the raw amino-acid sequence, 399 residues long: E3 ubiquitin-protein ligase APD4 (399 aa).

2 consecutive transmembrane segments (helical) span residues 42-62 (FGII…GVYG) and 284-304 (LIAY…AIHF). Residues 348–387 (CAICFDAPRDCCFLPCGHCVSCYQCGTKIKRTKGRCPICR) form an RING-type zinc finger.

In terms of tissue distribution, expressed in the shoot apical meristems (SAM), root tips and inflorescences.

The protein resides in the endomembrane system. Its subcellular location is the vacuole membrane. The catalysed reaction is S-ubiquitinyl-[E2 ubiquitin-conjugating enzyme]-L-cysteine + [acceptor protein]-L-lysine = [E2 ubiquitin-conjugating enzyme]-L-cysteine + N(6)-ubiquitinyl-[acceptor protein]-L-lysine.. The protein operates within protein modification; protein ubiquitination. Involved in pollen mitosis II (PMII) regulation during male gametogenesis. The polypeptide is E3 ubiquitin-protein ligase APD4 (Arabidopsis thaliana (Mouse-ear cress)).